The chain runs to 107 residues: Heme-degrading monooxygenase (107 aa).

Residues 2–93 (VIVANKTLIR…DYILGNEIEF (92 aa)) enclose the ABM domain. Asparagine 6 provides a ligand contact to Fe cation. A heme-binding site is contributed by histidine 76.

The protein belongs to the antibiotic biosynthesis monooxygenase family. Heme-degrading monooxygenase IsdG subfamily. In terms of assembly, homodimer.

The protein localises to the cytoplasm. It catalyses the reaction heme b + 3 reduced [NADPH--hemoprotein reductase] + 3 O2 = biliverdin IXalpha + CO + Fe(2+) + 3 oxidized [NADPH--hemoprotein reductase] + 3 H2O + H(+). Allows bacterial pathogens to use the host heme as an iron source. Catalyzes the oxidative degradation of the heme macrocyclic porphyrin ring to the biliverdin in the presence of a suitable electron donor such as ascorbate or NADPH--cytochrome P450 reductase, with subsequent release of free iron. The sequence is that of Heme-degrading monooxygenase from Shouchella clausii (strain KSM-K16) (Alkalihalobacillus clausii).